Reading from the N-terminus, the 320-residue chain is uncharacterized protein (320 aa).

To S.pombe SpAC23H3.12c.

This is an uncharacterized protein from Saccharomyces cerevisiae (strain ATCC 204508 / S288c) (Baker's yeast).